Reading from the N-terminus, the 110-residue chain is Evasin P1166 (110 aa).

An N-terminal signal peptide occupies residues 1 to 24 (MEVKIFTLLQIALFIALGIHLVVA). 3 disulfides stabilise this stretch: C45/C67, C49/C69, and C60/C80. A glycan (N-linked (GlcNAc...) asparagine) is linked at N48. The interval 89 to 110 (SEYPNPKSSEIDAAAPLPRETH) is disordered.

Its subcellular location is the secreted. Functionally, salivary chemokine-binding protein which binds to host chemokines CXCL1, CXCL2 and CXCL8. The sequence is that of Evasin P1166 from Ixodes ricinus (Common tick).